A 396-amino-acid chain; its full sequence is MSRKQAAKSRPGSGGRRAEAERKRDERAARRALAKERRNRPDPGGSGCEEEFVSFANQLQALGLKLREVPGDGNCLFRALGDQLEGHSRNHLKHRQETVDYMIRQREDFEPFVEDDIPFEKHVASLSKPGTFAGNDAIVAFARNHQLNVVIHQLNAPLWQIRGTDKGSTRELHIAYRYGEHYDSVRRINDNSEAPAHLLTDFQMLHQDGANKKEKMKTKGVDVKDGLRDDVEDAVHKVGSATGCTDFNLIVQNLEAENYNIKSAITALLQVNQGTGNDAEENHEPGDRVKQRGPSREEAGSGRRLSGNQGRNEGRMETSEARASPAEESKAHKSQLPKVTNKQRREQQRLEKKKRQEERHRLKALENRNGSRDTGRSEADMNTQVTLVKTFAALNI.

The disordered stretch occupies residues 1–49 (MSRKQAAKSRPGSGGRRAEAERKRDERAARRALAKERRNRPDPGGSGCE). The segment covering 16-41 (RRAEAERKRDERAARRALAKERRNRP) has biased composition (basic and acidic residues). Residues 64–188 (LKLREVPGDG…GEHYDSVRRI (125 aa)) form the OTU domain. K65 carries the N6-acetyllysine modification. Residues 69 to 75 (VPGDGNC) form a cys-loop region. Residue D72 is part of the active site. Catalysis depends on C75, which acts as the Nucleophile. K121 and K128 each carry N6-acetyllysine. The interval 126 to 136 (LSKPGTFAGND) is variable-loop. Residues 176 to 181 (YRYGEH) are his-loop. The active site involves H181. K219 carries the post-translational modification N6-acetyllysine. In terms of domain architecture, UBA-like spans 229 to 269 (DDVEDAVHKVGSATGCTDFNLIVQNLEAENYNIKSAITALL). Positions 275 to 381 (TGNDAEENHE…RDTGRSEADM (107 aa)) are disordered. 3 stretches are compositionally biased toward basic and acidic residues: residues 280–301 (EENHEPGDRVKQRGPSREEAGS), 312–331 (NEGRMETSEARASPAEESKA), and 343–379 (QRREQQRLEKKKRQEERHRLKALENRNGSRDTGRSEA). K290 is subject to N6-acetyllysine.

In terms of processing, glucose and fatty acids stimulate CREBBP-dependent acetylation, promoting its nuclear translocation.

Its subcellular location is the cytoplasm. The protein localises to the nucleus. It carries out the reaction Thiol-dependent hydrolysis of ester, thioester, amide, peptide and isopeptide bonds formed by the C-terminal Gly of ubiquitin (a 76-residue protein attached to proteins as an intracellular targeting signal).. Its function is as follows. Deubiquitinating enzyme that hydrolyzes 'Lys-6'- and 'Lys-11'-linked polyubiquitin. Also hydrolyzes heterotypic (mixed and branched) and homotypic chains. Important regulator of energy metabolism. Glucose and fatty acids trigger its nuclear translocation by CBP-dependent acetylation. In the nucleus, deubiquitinates and stabilizes the nuclear receptor PPARD regulating the expression of various genes involved in glucose and lipid metabolism and oxidative phosphorylation. Also acts as a negative regulator of the ribosome quality control (RQC) by mediating deubiquitination of 40S ribosomal proteins RPS10/eS10 and RPS20/uS10, thereby antagonizing ZNF598-mediated 40S ubiquitination. The polypeptide is OTU domain-containing protein 3 (Otud3) (Mus musculus (Mouse)).